We begin with the raw amino-acid sequence, 553 residues long: Probable bifunctional riboflavin biosynthesis protein RIBA 2, chloroplastic (553 aa).

A chloroplast-targeting transit peptide spans 1-56 (MASISPTSSSVAALRGHPVQFVKGGAVSKEAKGSISFSPVANSNNANVKFTGLRVA). A DHBP synthase region spans residues 62–336 (DGAFPGDGYS…IADLIRYRRK (275 aa)). Residues 70–90 (YSGNDNTVLPKSTSVRGQDYP) are disordered. Residues 72–85 (GNDNTVLPKSTSVR) show a composition bias toward polar residues. Residues 160-161 (RE), Asp165, 275-279 (RAGHT), and Glu299 contribute to the D-ribulose 5-phosphate site. Glu161 is a Mg(2+) binding site. His278 is a Mg(2+) binding site. The segment at 337–553 (RDRLVERSSV…TGSNGAKGEH (217 aa)) is GTP cyclohydrolase II. 387–391 (RVHSE) lines the GTP pocket. Cys392, Cys403, and Cys405 together coordinate Zn(2+). Residues Gln408, 431–433 (EGR), and Thr453 each bind GTP. The Proton acceptor; for GTP cyclohydrolase activity role is filled by Asp465. Arg467 functions as the Nucleophile; for GTP cyclohydrolase activity in the catalytic mechanism. Residues Thr488 and Lys493 each contribute to the GTP site.

In the N-terminal section; belongs to the DHBP synthase family. It in the C-terminal section; belongs to the GTP cyclohydrolase II family. It depends on Mg(2+) as a cofactor. The cofactor is Mn(2+). Zn(2+) serves as cofactor.

It localises to the plastid. It is found in the chloroplast. The enzyme catalyses D-ribulose 5-phosphate = (2S)-2-hydroxy-3-oxobutyl phosphate + formate + H(+). It carries out the reaction GTP + 4 H2O = 2,5-diamino-6-hydroxy-4-(5-phosphoribosylamino)-pyrimidine + formate + 2 phosphate + 3 H(+). The protein operates within cofactor biosynthesis; riboflavin biosynthesis; 2-hydroxy-3-oxobutyl phosphate from D-ribulose 5-phosphate: step 1/1. It functions in the pathway cofactor biosynthesis; riboflavin biosynthesis; 5-amino-6-(D-ribitylamino)uracil from GTP: step 1/4. Functionally, involved in riboflavin biosynthesis. Catalyzes both the conversion of D-ribulose 5-phosphate to formate and 3,4-dihydroxy-2-butanone 4-phosphate and the conversion of GTP to 2,5-diamino-6-ribosylamino-4(3H)-pyrimidinone 5'-phosphate (DARP), formate and pyrophosphate. The polypeptide is Probable bifunctional riboflavin biosynthesis protein RIBA 2, chloroplastic (RIBA2) (Oryza sativa subsp. japonica (Rice)).